A 421-amino-acid chain; its full sequence is Serine protease HTRA2, mitochondrial (421 aa).

The helical transmembrane segment at 63–81 (VIRFFVPFSLGALASTMVA) threads the bilayer. The IAP-binding motif lies at 74 to 77 (ALAS). A serine protease region spans residues 138–301 (SNGSGFVIEQ…IPIDYVKVFL (164 aa)). Active-site charge relay system residues include His156, Asp188, and Ser265. The region spanning 324–409 (MGITMLTLTP…ELDIVILRGV (86 aa)) is the PDZ domain.

This sequence belongs to the peptidase S1C family. As to quaternary structure, interacts with th/DIAP1 (via BIR 2 domain).

The protein resides in the mitochondrion intermembrane space. Its subcellular location is the mitochondrion membrane. It catalyses the reaction Cleavage of non-polar aliphatic amino-acids at the P1 position, with a preference for Val, Ile and Met. At the P2 and P3 positions, Arg is selected most strongly with a secondary preference for other hydrophilic residues.. Functionally, serine protease that shows proteolytic activity against a non-specific substrate beta-casein. Promotes or induces cell death either by direct binding to and inhibition of BIRC proteins (also called inhibitor of apoptosis proteins, IAPs), leading to an increase in caspase activity, or by a BIRC inhibition-independent, caspase-independent and serine protease activity-dependent mechanism. Can antagonize antiapoptotic activity of th/Diap1 by directly inducing the degradation of th/Diap1. The sequence is that of Serine protease HTRA2, mitochondrial from Drosophila virilis (Fruit fly).